The chain runs to 391 residues: Serpin-ZX (391 aa).

An RCL region spans residues 337–361 (GTEAAAASAGVIKLRGLLMEEDEID). N-linked (GlcNAc...) asparagine glycosylation occurs at asparagine 375.

This sequence belongs to the serpin family. As to quaternary structure, interacts with RD21A. In terms of tissue distribution, expressed in root tips. Expressed in siliques (at protein level).

The protein localises to the secreted. It is found in the extracellular space. The protein resides in the apoplast. It localises to the cytoplasm. Inhibits metacaspase-9 (MC9) cysteine protease. Functions through cleavage of its reactive center loop and covalent binding to MC9. Involved in the control of elicitor-stimulated programmed cell death (PCD). During infection by the necrotrophic fungal pathogen Botrytis cinerea, functions to protect cells by limiting the PCD-promoting protease RD21A activity that is released from the ER body or vacuole to the cytoplasm. Involved in the control of water stress-induced cell death by limiting the pro-death protease RD21A activity that is released from the vacuole to the cytoplasm. The polypeptide is Serpin-ZX (Arabidopsis thaliana (Mouse-ear cress)).